The sequence spans 250 residues: Gamma-secretase subunit APH1-like (250 aa).

7 consecutive transmembrane segments (helical) span residues Ala5–Ile25, Pro29–Leu49, Leu57–Phe77, Ile116–Leu136, Phe157–Ile177, Ile191–Glu211, and Gly212–Gly232.

This sequence belongs to the APH-1 family. In terms of assembly, probable component of the gamma-secretase complex, a complex composed of a presenilin homodimer, nicastrin, APH1 and PEN2.

The protein localises to the membrane. Functionally, probable subunit of the gamma-secretase complex, an endoprotease complex that catalyzes the intramembrane cleavage of integral proteins such as Notch receptors. The polypeptide is Gamma-secretase subunit APH1-like (Arabidopsis thaliana (Mouse-ear cress)).